The chain runs to 214 residues: MFASRAIRMMSMRPMARTMATKAAAPVKVPVQLFGLDGTYATALYTAAAKESDLSKTEGSLAKLRDVFAQQPEVAQIVSNPTLSHEDKQTVVNVLSQAVGGDKTLTNFLTVISDNNRLALIPGIIEKFETLVNASKGLVEATVTSASELDKKTVNRIQAAIAGSSFVGEGELKLNLKVNPDILGGLIVEVAERTVDVSVASKIARLNHVLSEPI.

The N-terminal 24 residues, 1–24, are a transit peptide targeting the mitochondrion; the sequence is MFASRAIRMMSMRPMARTMATKAA.

In terms of assembly, F-type ATP synthases have 2 components, the catalytic core F(1) and the membrane-embedded component F(0), linked together by a central stalk and a peripheral stalk. The central stalk, also called rotor shaft, is often seen as part of F(1). The peripheral stalk is seen as part of F(0). F(0) contains the membrane channel next to the rotor. F-type ATP synthases form dimers but each monomer functions independently in ATP generation. The dimer consists of 17 different polypeptides: ATP1 (subunit alpha, 3 molecules per monomer, part of F(1)), ATP2 (subunit beta, 3 copies per monomer, part of F(1)), ATP3 (subunit gamma, part of the central stalk), ATP4 (subunit b, part of the peripheral stalk), ATP5/OSCP (subunit 5/OSCP, part of the peripheral stalk), ATP6 (subunit a, part of the peripheral stalk), ATP7 (subunit d, part of the peripheral stalk), ATP8 (subunit 8, part of the peripheral stalk), OLI1 (subunit c, part of the rotor, 10 molecules per monomer), ATP14 (subunit h, part of the peripheral stalk), ATP15 (subunit epsilon, part of the central stalk), ATP16 (subunit delta, part of the central stalk), ATP17 (subunit f, part of the peripheral stalk), ATP18 (subunit i/j, part of the peripheral stalk), ATP19 (subunit k, dimer-specific, at interface between monomers), ATP20 (subunit g, at interface between monomers), TIM11 (subunit e, at interface between monomers).

It is found in the mitochondrion inner membrane. Mitochondrial membrane ATP synthase (F(1)F(0) ATP synthase or Complex V) produces ATP from ADP in the presence of a proton gradient across the membrane which is generated by electron transport complexes of the respiratory chain. F-type ATP synthases consist of two structural domains, F(1) - containing the extramembraneous catalytic core, and F(0) - containing the membrane proton channel, linked together by a central stalk and a peripheral stalk. During catalysis, ATP synthesis in the catalytic domain of F(1) is coupled via a rotary mechanism of the central stalk subunits to proton translocation. Part of the complex F(0) domain and the peripheral stalk, which acts as a stator to hold the catalytic alpha/ATP1(3)beta/ATP2(3) subcomplex and subunit a/ATP6 static relative to the rotary elements. This chain is ATP synthase subunit 5, mitochondrial, found in Yarrowia lipolytica (strain CLIB 122 / E 150) (Yeast).